The following is a 279-amino-acid chain: 30 kDa ribonucleoprotein, chloroplastic (279 aa).

One can recognise an RRM 1 domain in the interval 87 to 165 (LKIFVGNLLF…RALRVNSGPP (79 aa)). The disordered stretch occupies residues 156–187 (RALRVNSGPPPEKRENSSFRENSSFRGGSRGG). The linker (Gly-rich) stretch occupies residues 166–193 (PEKRENSSFRENSSFRGGSRGGGSFDSS). An RRM 2 domain is found at 194–272 (NRVYVGNLAW…RAIRVSPAEA (79 aa)).

In terms of tissue distribution, expressed at high levels in the leaves and seedlings, and lower levels are seen in the stems and roots.

Its subcellular location is the plastid. It localises to the chloroplast. Its function is as follows. Could be involved in splicing and/or processing of chloroplast RNA's. The polypeptide is 30 kDa ribonucleoprotein, chloroplastic (Nicotiana plumbaginifolia (Leadwort-leaved tobacco)).